A 263-amino-acid chain; its full sequence is Putative replication protein PDa0002 (263 aa).

In Xylella fastidiosa (strain Temecula1 / ATCC 700964), this protein is Putative replication protein PDa0002.